The following is a 333-amino-acid chain: Transaldolase (333 aa).

The active-site Schiff-base intermediate with substrate is Lys-135.

This sequence belongs to the transaldolase family. Type 1 subfamily. Homodimer.

It localises to the cytoplasm. It carries out the reaction D-sedoheptulose 7-phosphate + D-glyceraldehyde 3-phosphate = D-erythrose 4-phosphate + beta-D-fructose 6-phosphate. It participates in carbohydrate degradation; pentose phosphate pathway; D-glyceraldehyde 3-phosphate and beta-D-fructose 6-phosphate from D-ribose 5-phosphate and D-xylulose 5-phosphate (non-oxidative stage): step 2/3. In terms of biological role, transaldolase is important for the balance of metabolites in the pentose-phosphate pathway. This is Transaldolase from Prochlorococcus marinus (strain MIT 9312).